We begin with the raw amino-acid sequence, 921 residues long: Translation initiation factor IF-2 (921 aa).

The segment at 1-296 (MADNNTPGDK…PGPQKQRGRL (296 aa)) is disordered. Positions 80–89 (RPSGPRPGSS) are enriched in low complexity. The span at 116–182 (ARVRDMEERR…AKKRFGEGEA (67 aa)) shows a compositional bias: basic and acidic residues. Residues 183–257 (PRPATAAPQQ…LGRAPGVAAG (75 aa)) are compositionally biased toward low complexity. The 170-residue stretch at 417 to 586 (PRSPVVTVMG…MIALQADILD (170 aa)) folds into the tr-type G domain. The interval 426–433 (GHVDHGKT) is G1. 426 to 433 (GHVDHGKT) lines the GTP pocket. Residues 451-455 (GITQH) form a G2 region. A G3 region spans residues 474–477 (DTPG). Residues 474–478 (DTPGH) and 528–531 (NKID) contribute to the GTP site. Residues 528-531 (NKID) form a G4 region. Residues 564–566 (SAK) form a G5 region.

This sequence belongs to the TRAFAC class translation factor GTPase superfamily. Classic translation factor GTPase family. IF-2 subfamily.

Its subcellular location is the cytoplasm. One of the essential components for the initiation of protein synthesis. Protects formylmethionyl-tRNA from spontaneous hydrolysis and promotes its binding to the 30S ribosomal subunits. Also involved in the hydrolysis of GTP during the formation of the 70S ribosomal complex. The sequence is that of Translation initiation factor IF-2 from Bradyrhizobium sp. (strain BTAi1 / ATCC BAA-1182).